A 125-amino-acid chain; its full sequence is Large ribosomal subunit protein uL22 (125 aa).

This sequence belongs to the universal ribosomal protein uL22 family. Part of the 50S ribosomal subunit.

Its function is as follows. This protein binds specifically to 23S rRNA; its binding is stimulated by other ribosomal proteins, e.g. L4, L17, and L20. It is important during the early stages of 50S assembly. It makes multiple contacts with different domains of the 23S rRNA in the assembled 50S subunit and ribosome. The globular domain of the protein is located near the polypeptide exit tunnel on the outside of the subunit, while an extended beta-hairpin is found that lines the wall of the exit tunnel in the center of the 70S ribosome. The polypeptide is Large ribosomal subunit protein uL22 (Erythrobacter litoralis (strain HTCC2594)).